We begin with the raw amino-acid sequence, 172 residues long: Shikimate kinase (172 aa).

An ATP-binding site is contributed by 14–19 (GAGKST). Ser-18 contacts Mg(2+). Residues Asp-36, Arg-60, and Gly-82 each coordinate substrate. An ATP-binding site is contributed by Arg-120. Arg-140 contacts substrate. ATP is bound at residue Gln-157.

Belongs to the shikimate kinase family. Monomer. Requires Mg(2+) as cofactor.

It localises to the cytoplasm. It catalyses the reaction shikimate + ATP = 3-phosphoshikimate + ADP + H(+). It functions in the pathway metabolic intermediate biosynthesis; chorismate biosynthesis; chorismate from D-erythrose 4-phosphate and phosphoenolpyruvate: step 5/7. In terms of biological role, catalyzes the specific phosphorylation of the 3-hydroxyl group of shikimic acid using ATP as a cosubstrate. The sequence is that of Shikimate kinase from Colwellia psychrerythraea (strain 34H / ATCC BAA-681) (Vibrio psychroerythus).